We begin with the raw amino-acid sequence, 441 residues long: Glutamate--tRNA ligase 2 (441 aa).

The 'HIGH' region signature appears at 9–19; that stretch reads PSPTGYIHVGN. The 'KMSKS' region motif lies at 239–243; sequence ALSKR. Position 242 (Lys242) interacts with ATP.

Belongs to the class-I aminoacyl-tRNA synthetase family. Glutamate--tRNA ligase type 1 subfamily. As to quaternary structure, monomer.

Its subcellular location is the cytoplasm. It catalyses the reaction tRNA(Glu) + L-glutamate + ATP = L-glutamyl-tRNA(Glu) + AMP + diphosphate. In terms of biological role, catalyzes the attachment of glutamate to tRNA(Glu) in a two-step reaction: glutamate is first activated by ATP to form Glu-AMP and then transferred to the acceptor end of tRNA(Glu). This chain is Glutamate--tRNA ligase 2, found in Cereibacter sphaeroides (strain ATCC 17023 / DSM 158 / JCM 6121 / CCUG 31486 / LMG 2827 / NBRC 12203 / NCIMB 8253 / ATH 2.4.1.) (Rhodobacter sphaeroides).